Here is a 1129-residue protein sequence, read N- to C-terminus: Protein LANA1 (1129 aa).

2 disordered regions span residues 1–988 (MAPP…PVPY) and 1110–1129 (LPLTQPGENQGPGDSPQEMT). Basic and acidic residues-rich tracts occupy residues 28 to 41 (RSPERCDLGDDLHL) and 48 to 58 (VADSVDGRECG). A compositionally biased stretch (pro residues) spans 85-104 (PVAPIPSPAPATPLPPPALL). The segment covering 139–156 (SPESSQRPPLSSPTGRPD) has biased composition (polar residues). The segment covering 161 to 185 (MRPPPSQQTTPPHSPTTPPPEPPSK) has biased composition (pro residues). The span at 186 to 197 (SSPDSLAPSTLR) shows a compositional bias: low complexity. The span at 207 to 217 (PQGPSTLNPIC) shows a compositional bias: polar residues. A compositionally biased stretch (low complexity) spans 263–275 (PISIGSSSPSEGS). 2 stretches are compositionally biased toward basic and acidic residues: residues 292–301 (EASKNEKECS) and 314–323 (EISKESQVDK). Acidic residues predominate over residues 324–419 (DDNDNKDDEE…DKKEDEEDGG (96 aa)). Low complexity predominate over residues 431–471 (QQQQEPQQQEPQQQEPQQQEPQQQEPQQQEPQQQEPQQQEP). The span at 472–528 (QQREPQQREPQQREPQQREPQQREPQQREPQQREPQQREPQQREPQQREPQQREPQQ) shows a compositional bias: basic and acidic residues. The segment covering 529 to 596 (REPQQQEPQQ…QQQEPQQQDE (68 aa)) has biased composition (low complexity). The span at 597–888 (QQQDEQQQDE…QELEEVEEQE (292 aa)) shows a compositional bias: acidic residues. A compositionally biased stretch (polar residues) spans 924–934 (THEQIASSPPG). Over residues 962–979 (PGVRMRRVPVTHPKKPHP) the composition is skewed to basic residues. The tract at residues 1008–1129 (FLGKDGRRDP…GPGDSPQEMT (122 aa)) is DNA-binding domain.

In terms of assembly, homooligomer. Interacts with host BRD2. Interacts with host RELA, ELOB, ELOC and CUL5; these interactions induce the proteasomal degradation of host RELA. Interacts with host TRIM28 and NFE2L2/NRF2; these interactions are essential for the shutdown of lytic gene expression during the early stage of infection. Interacts (via N-terminus) with host histones H2A and H2B; these interactions are essential to dock LANA1 onto chromosomes. Interacts with host BUB1 and PCNA. Interacts with host NAP1L1; this interaction is required for LANA1-dependent DNA replication. Interacts with components of the host MLL1 complex KMT2A and WDR5.

It localises to the host nucleus. Its function is as follows. Multifunctional protein that plays a role in the replication and long-term persistence of the viral episomal genome in dividing cells. Binds to mitotic chromosomes via its N-terminal region and to a 16-bp imperfect palindrome within the origin of replication (oriP) located in the viral terminal repeat (TR) through its C-terminal. Tethers viral episomes to chromosomes during mitosis. Plays a critical role in the shutdown of lytic gene expression during the early stage of infection by interacting with host TRIM28. Also plays a role in the repression of host NF-kappa-B activity upon TNF-alpha stimulation by promoting the proteasomal degradation of host RELA. Promotes nuclear localization and cleavage of host STAT6 leading to constitutive activation of the IL13/STAT6 signaling pathway to promote viral latency. Interacts with and modulates the histone methyltransferase MLL1 complex activity, leading to its recruitment on viral DNA terminal repeats changing the dynamic of histone H3 methylated 'Lys-4'(H3K4me) profile during the initial hours following infection. This is Protein LANA1 (LANA1) from Homo sapiens (Human).